The sequence spans 273 residues: NH(3)-dependent NAD(+) synthetase (273 aa).

G46–S53 contacts ATP. D52 lines the Mg(2+) pocket. Residue R139 coordinates deamido-NAD(+). T159 serves as a coordination point for ATP. Residue E164 participates in Mg(2+) binding. Residues K172 and D179 each coordinate deamido-NAD(+). K188 and T210 together coordinate ATP. Position 259–260 (H259–K260) interacts with deamido-NAD(+).

This sequence belongs to the NAD synthetase family. As to quaternary structure, homodimer.

It catalyses the reaction deamido-NAD(+) + NH4(+) + ATP = AMP + diphosphate + NAD(+) + H(+). It participates in cofactor biosynthesis; NAD(+) biosynthesis; NAD(+) from deamido-NAD(+) (ammonia route): step 1/1. Catalyzes the ATP-dependent amidation of deamido-NAD to form NAD. Uses ammonia as a nitrogen source. The sequence is that of NH(3)-dependent NAD(+) synthetase from Mycobacteroides abscessus (strain ATCC 19977 / DSM 44196 / CCUG 20993 / CIP 104536 / JCM 13569 / NCTC 13031 / TMC 1543 / L948) (Mycobacterium abscessus).